The chain runs to 423 residues: Histidine--tRNA ligase (423 aa).

This sequence belongs to the class-II aminoacyl-tRNA synthetase family. As to quaternary structure, homodimer.

The protein localises to the cytoplasm. The enzyme catalyses tRNA(His) + L-histidine + ATP = L-histidyl-tRNA(His) + AMP + diphosphate + H(+). This is Histidine--tRNA ligase from Actinobacillus succinogenes (strain ATCC 55618 / DSM 22257 / CCUG 43843 / 130Z).